A 184-amino-acid chain; its full sequence is MMSQPAKVLLLYAHPESQDSVANRVLLKPATQLSNVTVHDLYAHYPDFFIDIPREQALLREHEVIVFQHPLYTYSCPALLKEWLDRVLSRGFASGPGGNQLAGKYWRSVITTGEPESAYRYDALNRYPMSDVLRPFELAAGMCRMHWLSPIIIYWARRQSAQELASHARAYGDWLANPLSPGGR.

It belongs to the NAD(P)H dehydrogenase (quinone) family. KefG subfamily. In terms of assembly, interacts with KefB.

It localises to the cell inner membrane. The enzyme catalyses a quinone + NADH + H(+) = a quinol + NAD(+). It catalyses the reaction a quinone + NADPH + H(+) = a quinol + NADP(+). In terms of biological role, regulatory subunit of a potassium efflux system that confers protection against electrophiles. Required for full activity of KefB. The sequence is that of Glutathione-regulated potassium-efflux system ancillary protein KefG from Escherichia coli O8 (strain IAI1).